A 300-amino-acid chain; its full sequence is tRNA dimethylallyltransferase (300 aa).

Residue 11-18 (GPTAVGKS) coordinates ATP. 13–18 (TAVGKS) lines the substrate pocket. Residues 35 to 38 (DSIQ) are interaction with substrate tRNA.

The protein belongs to the IPP transferase family. Monomer. Requires Mg(2+) as cofactor.

The enzyme catalyses adenosine(37) in tRNA + dimethylallyl diphosphate = N(6)-dimethylallyladenosine(37) in tRNA + diphosphate. Its function is as follows. Catalyzes the transfer of a dimethylallyl group onto the adenine at position 37 in tRNAs that read codons beginning with uridine, leading to the formation of N6-(dimethylallyl)adenosine (i(6)A). In Borrelia recurrentis (strain A1), this protein is tRNA dimethylallyltransferase.